A 173-amino-acid chain; its full sequence is Putative 2-oxo-4-hydroxy-4-carboxy-5-ureidoimidazoline decarboxylase (173 aa).

The Proton donor role is filled by His67. Substrate is bound by residues Pro68, 84 to 88, and 119 to 123; these read SQREQ and FVLAA. The Microbody targeting signal motif lies at 171-173; that stretch reads AKL.

This sequence belongs to the OHCU decarboxylase family. Apparently not expressed.

Its subcellular location is the peroxisome. The catalysed reaction is 5-hydroxy-2-oxo-4-ureido-2,5-dihydro-1H-imidazole-5-carboxylate + H(+) = (S)-allantoin + CO2. It functions in the pathway purine metabolism; urate degradation; (S)-allantoin from urate: step 3/3. Functionally, catalyzes the stereoselective decarboxylation of 2-oxo-4-hydroxy-4-carboxy-5-ureidoimidazoline (OHCU) to (S)-allantoin. The chain is Putative 2-oxo-4-hydroxy-4-carboxy-5-ureidoimidazoline decarboxylase (URAD) from Homo sapiens (Human).